A 341-amino-acid polypeptide reads, in one-letter code: Uroporphyrinogen decarboxylase (341 aa).

Residues 23–27 (RQAGR), aspartate 73, tyrosine 147, serine 202, and histidine 318 each bind substrate.

This sequence belongs to the uroporphyrinogen decarboxylase family. As to quaternary structure, homodimer.

It localises to the cytoplasm. It catalyses the reaction uroporphyrinogen III + 4 H(+) = coproporphyrinogen III + 4 CO2. It participates in porphyrin-containing compound metabolism; protoporphyrin-IX biosynthesis; coproporphyrinogen-III from 5-aminolevulinate: step 4/4. Catalyzes the decarboxylation of four acetate groups of uroporphyrinogen-III to yield coproporphyrinogen-III. The polypeptide is Uroporphyrinogen decarboxylase (Erythrobacter litoralis (strain HTCC2594)).